A 218-amino-acid chain; its full sequence is Pyridoxine/pyridoxamine 5'-phosphate oxidase (218 aa).

Substrate contacts are provided by residues 14 to 17 (RREY) and Lys72. FMN contacts are provided by residues 67–72 (RIVLLK), 82–83 (YT), Arg88, Lys89, and Gln111. Tyr129, Arg133, and Ser137 together coordinate substrate. FMN is bound by residues 146 to 147 (QS) and Trp191. A substrate-binding site is contributed by 197-199 (RLH). FMN is bound at residue Arg201.

Belongs to the pyridoxamine 5'-phosphate oxidase family. Homodimer. It depends on FMN as a cofactor.

The catalysed reaction is pyridoxamine 5'-phosphate + O2 + H2O = pyridoxal 5'-phosphate + H2O2 + NH4(+). The enzyme catalyses pyridoxine 5'-phosphate + O2 = pyridoxal 5'-phosphate + H2O2. It functions in the pathway cofactor metabolism; pyridoxal 5'-phosphate salvage; pyridoxal 5'-phosphate from pyridoxamine 5'-phosphate: step 1/1. The protein operates within cofactor metabolism; pyridoxal 5'-phosphate salvage; pyridoxal 5'-phosphate from pyridoxine 5'-phosphate: step 1/1. Catalyzes the oxidation of either pyridoxine 5'-phosphate (PNP) or pyridoxamine 5'-phosphate (PMP) into pyridoxal 5'-phosphate (PLP). The polypeptide is Pyridoxine/pyridoxamine 5'-phosphate oxidase (Escherichia coli (strain 55989 / EAEC)).